We begin with the raw amino-acid sequence, 537 residues long: NAD(P)H-quinone oxidoreductase chain 4 3 (537 aa).

The next 13 membrane-spanning stretches (helical) occupy residues Phe6 to Ile26, Trp36 to Tyr56, Leu87 to Trp107, Leu115 to Asp135, Leu136 to Ile156, Phe169 to Phe189, Ala209 to Phe229, Ser243 to Ile263, Phe277 to Phe297, Met314 to Leu334, Gln335 to Glu355, Leu387 to Thr407, and Val417 to Leu437.

This sequence belongs to the complex I subunit 4 family.

The protein resides in the cellular thylakoid membrane. It catalyses the reaction a plastoquinone + NADH + (n+1) H(+)(in) = a plastoquinol + NAD(+) + n H(+)(out). The catalysed reaction is a plastoquinone + NADPH + (n+1) H(+)(in) = a plastoquinol + NADP(+) + n H(+)(out). NDH-1 shuttles electrons from NAD(P)H, via FMN and iron-sulfur (Fe-S) centers, to quinones in the respiratory chain. The immediate electron acceptor for the enzyme in this species is believed to be plastoquinone. Couples the redox reaction to proton translocation (for every two electrons transferred, four hydrogen ions are translocated across the cytoplasmic membrane), and thus conserves the redox energy in a proton gradient. The sequence is that of NAD(P)H-quinone oxidoreductase chain 4 3 from Trichormus variabilis (strain ATCC 29413 / PCC 7937) (Anabaena variabilis).